A 781-amino-acid chain; its full sequence is Death domain-containing protein 1 (781 aa).

ZU5 domains are found at residues 167–301 and 302–483; these read IMEK…VSCL and KKES…VLHL. The 86-residue stretch at 679 to 764 folds into the Death domain; sequence DNLLHWLAEE…DLAEELKFKW (86 aa).

This chain is Death domain-containing protein 1 (DTHD1), found in Homo sapiens (Human).